Reading from the N-terminus, the 428-residue chain is Bifunctional IPC transferase and DIPP synthase (428 aa).

The mobA-like NTP transferase stretch occupies residues 2–227 (VETAVILAGG…KAKKYLVKTA (226 aa)). Residues 8–10 (LAG), Lys-25, Glu-80, and Glu-116 each bind CTP. Glu-116 is a binding site for Mg(2+). The interval 228–425 (IKGVGDGFIS…LTIYLVWKKK (198 aa)) is CDP-alcohol phosphatidyltransferases. Helical transmembrane passes span 266-286 (FLLGMFSALVAYFSPALGGIL), 336-356 (PSWDFMPWVFAALFGSVMVSY), and 389-409 (MIMIFTILGWIKALFVVLAII).

The protein in the N-terminal section; belongs to the MobA family. This sequence in the C-terminal section; belongs to the CDP-alcohol phosphatidyltransferase class-I family. Mg(2+) serves as cofactor.

It localises to the membrane. It carries out the reaction 1D-myo-inositol 3-phosphate + CTP + H(+) = CDP-1L-myo-inositol + diphosphate. It catalyses the reaction CDP-1L-myo-inositol + 1D-myo-inositol 3-phosphate = bis(1L-myo-inositol) 3,1'-phosphate 1-phosphate + CMP + H(+). Involved in biosynthesis of di-myo-inositol phosphate (DIP), a widespread organic solute in microorganisms adapted to hot environments. Catalyzes the condensation of CTP and L-myo-inositol-1-phosphate into CDP-L-myo-inositol, as well as the biosynthesis of di-myo-inositol-1,3'-phosphate-1'-phosphate (DIPP) from CDP-L-myo-inositol and L-myo-inositol-1-phosphate. The sequence is that of Bifunctional IPC transferase and DIPP synthase (spsI) from Aquifex aeolicus (strain VF5).